A 276-amino-acid chain; its full sequence is Triple specificity protein phosphatase PtpB (276 aa).

Residue cysteine 160 is the Phosphocysteine intermediate of the active site. The segment at 232–250 (LGVRAEYLAAARQTIDETY) is UIM-like region.

It belongs to the protein-tyrosine phosphatase family. In terms of assembly, interacts (via UIM-like region) with host ubiquitin; activating the phosphatidylinositol phosphate phosphatase activity.

It localises to the secreted. Its subcellular location is the host cytoplasm. It is found in the host cell membrane. It catalyses the reaction O-phospho-L-tyrosyl-[protein] + H2O = L-tyrosyl-[protein] + phosphate. The enzyme catalyses O-phospho-L-seryl-[protein] + H2O = L-seryl-[protein] + phosphate. It carries out the reaction O-phospho-L-threonyl-[protein] + H2O = L-threonyl-[protein] + phosphate. The catalysed reaction is 1,2-dioctanoyl-sn-glycero-3-phospho-(1-D-myo-inositol-3-phosphate) + H2O = 1,2-dioctanoyl-sn-glycero-3-phospho-(1D-myo-inositol) + phosphate. It catalyses the reaction 1,2-dioctanoyl-sn-glycero-3-phospho-(1-D-myo-inositol-4-phosphate) + H2O = 1,2-dioctanoyl-sn-glycero-3-phospho-(1D-myo-inositol) + phosphate. The enzyme catalyses 1,2-dioctanoyl-sn-glycero-3-phospho-(1D-myo-inositol-5-phosphate) + H2O = 1,2-dioctanoyl-sn-glycero-3-phospho-(1D-myo-inositol) + phosphate. With respect to regulation, binding to host ubiquitin is required to activate the phosphatidylinositol phosphate phosphatase activity. Phosphatase activity is inhibited by sodium orthovanadate, a specific inhibitor of tyrosine phosphatases, but not by okadaic acid, an inhibitor of serine/threonine phosphatases. Inhibition of the enzyme reduces mycobacterial survival in infected macrophages. Inhibitors also enhance killing efficacy by first-line antibiotics. Functionally, essential virulence factor that promotes mycobacterial survival within host macrophages. Acts as a phosphatase that possesses triple substrate specificity toward phosphotyrosine, phosphoserine/threonine and phosphoinositides. Supports mycobacteria survival during infection by modulating the normal host signaling pathways, attenuating the bactericidal immune responses and promoting the host cell survival. Inhibits host pyroptosis by disrupting the membrane localization of host gasdermin-D (GSDMD): acts by catalyzing dephosphorylation of phosphatidylinositol (4,5)-bisphosphate and phosphatidylinositol 4-phosphate, thereby inhibiting the membrane targeting of GSDMD and subsequent cytokine release and pyroptosis. Inhibits host inflammatory responses and apoptosis through impeding the NF-kappa-B and MAPK signal pathways and TP53/p53 expression in the macrophage. Blocks the IL6/IL-6 production by down-regulating ERK1/2, p38 and p65 activity. Prevents macrophage cell death by activating the Akt pathway and blocking caspase 3 activity. Reduces the expression of iNOS in activated macrophages and inhibits the generation of destroying reactive nitrogen intermediate NO. In Mycobacterium tuberculosis (strain ATCC 25618 / H37Rv), this protein is Triple specificity protein phosphatase PtpB.